Consider the following 92-residue polypeptide: Small ribosomal subunit protein uS19c (92 aa).

This sequence belongs to the universal ribosomal protein uS19 family.

The protein localises to the plastid. It is found in the chloroplast. Functionally, protein S19 forms a complex with S13 that binds strongly to the 16S ribosomal RNA. The polypeptide is Small ribosomal subunit protein uS19c (Panax ginseng (Korean ginseng)).